The chain runs to 381 residues: Homoserine O-succinyltransferase (381 aa).

In terms of domain architecture, AB hydrolase-1 spans 45–360 (NAVLVCHALN…PHGHDAFLLD (316 aa)). Serine 151 serves as the catalytic Nucleophile. Residue arginine 221 coordinates substrate. Catalysis depends on residues aspartate 321 and histidine 354. Aspartate 355 provides a ligand contact to substrate.

It belongs to the AB hydrolase superfamily. MetX family. As to quaternary structure, homodimer.

It localises to the cytoplasm. The enzyme catalyses L-homoserine + succinyl-CoA = O-succinyl-L-homoserine + CoA. It functions in the pathway amino-acid biosynthesis; L-methionine biosynthesis via de novo pathway; O-succinyl-L-homoserine from L-homoserine: step 1/1. Functionally, transfers a succinyl group from succinyl-CoA to L-homoserine, forming succinyl-L-homoserine. This Burkholderia ambifaria (strain ATCC BAA-244 / DSM 16087 / CCUG 44356 / LMG 19182 / AMMD) (Burkholderia cepacia (strain AMMD)) protein is Homoserine O-succinyltransferase.